The primary structure comprises 836 residues: Translation initiation factor IF-2 (836 aa).

Residues 1–17 (MLRLMRQKKLSIQRRTK) are compositionally biased toward basic residues. 2 disordered regions span residues 1 to 43 (MLRL…RTVK) and 83 to 240 (AAKK…KGAA). The segment covering 18–27 (TTVSSTTTGG) has biased composition (low complexity). Positions 83–153 (AAKKEADEKV…AAEEAKRYAE (71 aa)) are enriched in basic and acidic residues. Residues 154-167 (ADDSDNESSSEDYS) show a composition bias toward acidic residues. Over residues 192-202 (RGKNKVAKAKK) the composition is skewed to basic residues. Basic and acidic residues predominate over residues 203 to 229 (GGRDDENSKNSKNERESNRKNQKDAKF). Residues 335 to 505 (TRAPVVTIMG…LLQSEVLELT (171 aa)) enclose the tr-type G domain. Positions 344-351 (GHVDHGKT) are G1. Residue 344 to 351 (GHVDHGKT) participates in GTP binding. The G2 stretch occupies residues 369-373 (GITQH). The segment at 391–394 (DTPG) is G3. GTP contacts are provided by residues 391-395 (DTPGH) and 445-448 (NKID). Positions 445–448 (NKID) are G4. The interval 481–483 (SAK) is G5.

This sequence belongs to the TRAFAC class translation factor GTPase superfamily. Classic translation factor GTPase family. IF-2 subfamily.

Its subcellular location is the cytoplasm. One of the essential components for the initiation of protein synthesis. Protects formylmethionyl-tRNA from spontaneous hydrolysis and promotes its binding to the 30S ribosomal subunits. Also involved in the hydrolysis of GTP during the formation of the 70S ribosomal complex. This is Translation initiation factor IF-2 from Haemophilus influenzae (strain PittEE).